A 483-amino-acid chain; its full sequence is Protein nucleotidyltransferase YdiU (483 aa).

ATP-binding residues include Gly87, Gly89, Arg90, Lys110, Asp122, Gly123, Arg173, and Arg180. Catalysis depends on Asp249, which acts as the Proton acceptor. Residues Asn250 and Asp259 each contribute to the Mg(2+) site. Asp259 is an ATP binding site.

The protein belongs to the SELO family. Mg(2+) serves as cofactor. Mn(2+) is required as a cofactor.

It carries out the reaction L-seryl-[protein] + ATP = 3-O-(5'-adenylyl)-L-seryl-[protein] + diphosphate. The catalysed reaction is L-threonyl-[protein] + ATP = 3-O-(5'-adenylyl)-L-threonyl-[protein] + diphosphate. It catalyses the reaction L-tyrosyl-[protein] + ATP = O-(5'-adenylyl)-L-tyrosyl-[protein] + diphosphate. The enzyme catalyses L-histidyl-[protein] + UTP = N(tele)-(5'-uridylyl)-L-histidyl-[protein] + diphosphate. It carries out the reaction L-seryl-[protein] + UTP = O-(5'-uridylyl)-L-seryl-[protein] + diphosphate. The catalysed reaction is L-tyrosyl-[protein] + UTP = O-(5'-uridylyl)-L-tyrosyl-[protein] + diphosphate. Nucleotidyltransferase involved in the post-translational modification of proteins. It can catalyze the addition of adenosine monophosphate (AMP) or uridine monophosphate (UMP) to a protein, resulting in modifications known as AMPylation and UMPylation. This is Protein nucleotidyltransferase YdiU from Pelagibacter ubique (strain HTCC1062).